The chain runs to 333 residues: Glycerol-3-phosphate dehydrogenase [NAD(P)+] (333 aa).

Ser-10, Trp-11, and Lys-105 together coordinate NADPH. Sn-glycerol 3-phosphate-binding residues include Lys-105, Gly-136, and Thr-138. Residue Ala-140 participates in NADPH binding. The sn-glycerol 3-phosphate site is built by Lys-191, Asp-244, Ser-254, Arg-255, and Asn-256. Residue Lys-191 is the Proton acceptor of the active site. Position 255 (Arg-255) interacts with NADPH. 2 residues coordinate NADPH: Val-279 and Glu-281.

This sequence belongs to the NAD-dependent glycerol-3-phosphate dehydrogenase family.

It is found in the cytoplasm. It catalyses the reaction sn-glycerol 3-phosphate + NAD(+) = dihydroxyacetone phosphate + NADH + H(+). The catalysed reaction is sn-glycerol 3-phosphate + NADP(+) = dihydroxyacetone phosphate + NADPH + H(+). It participates in membrane lipid metabolism; glycerophospholipid metabolism. Its function is as follows. Catalyzes the reduction of the glycolytic intermediate dihydroxyacetone phosphate (DHAP) to sn-glycerol 3-phosphate (G3P), the key precursor for phospholipid synthesis. The chain is Glycerol-3-phosphate dehydrogenase [NAD(P)+] from Trichlorobacter lovleyi (strain ATCC BAA-1151 / DSM 17278 / SZ) (Geobacter lovleyi).